Consider the following 273-residue polypeptide: Holocytochrome c-type synthase (273 aa).

Residues 1–18 are compositionally biased toward low complexity; that stretch reads MGLSASSPAATAQSAAEP. A disordered region spans residues 1–39; the sequence is MGLSASSPAATAQSAAEPSKQHQVASPPSECPMHQEKMR. 2 HRM repeats span residues 30–35 and 40–45; these read ECPMHQ and GCPMHM.

It belongs to the cytochrome c-type heme lyase family.

The protein resides in the mitochondrion inner membrane. The enzyme catalyses holo-[cytochrome c] = apo-[cytochrome c] + heme b. In terms of biological role, lyase that catalyzes the covalent linking of the heme group to the cytochrome C apoprotein to produce the mature functional cytochrome. The protein is Holocytochrome c-type synthase (HCCS) of Gallus gallus (Chicken).